We begin with the raw amino-acid sequence, 258 residues long: Global transcriptional regulator CodY (258 aa).

The GAF domain stretch occupies residues 1-156 (MSSLLDKTRM…SATIIGLEIL (156 aa)). A DNA-binding region (H-T-H motif) is located at residues 204–223 (ASKIADKVGITRSVIVNALR).

It belongs to the CodY family.

The protein resides in the cytoplasm. Its function is as follows. DNA-binding global transcriptional regulator which is involved in the adaptive response to starvation and acts by directly or indirectly controlling the expression of numerous genes in response to nutrient availability. During rapid exponential growth, CodY is highly active and represses genes whose products allow adaptation to nutrient depletion. This is Global transcriptional regulator CodY from Clostridium botulinum (strain ATCC 19397 / Type A).